The following is a 267-amino-acid chain: Regulatory protein VirG (267 aa).

A Response regulatory domain is found at 29–143; the sequence is HVLLVDDDVA…EFLARIRVAL (115 aa). At D78 the chain carries 4-aspartylphosphate. The segment at residues 155 to 255 is a DNA-binding region (ompR/PhoB-type); the sequence is RRSFCFTDWT…ARGAGYFFDA (101 aa).

Post-translationally, phosphorylated by wide host range (WHR) VirA protein.

It is found in the cytoplasm. Its function is as follows. VirG is required for the positive regulation of at least two vir loci encoded by the Ti plasmid of A.tumefaciens. In Agrobacterium tumefaciens (strain 15955), this protein is Regulatory protein VirG (virG).